The sequence spans 179 residues: Large ribosomal subunit protein uL5 (179 aa).

It belongs to the universal ribosomal protein uL5 family. In terms of assembly, part of the 50S ribosomal subunit; part of the 5S rRNA/L5/L18/L25 subcomplex. Contacts the 5S rRNA and the P site tRNA. Forms a bridge to the 30S subunit in the 70S ribosome.

This is one of the proteins that bind and probably mediate the attachment of the 5S RNA into the large ribosomal subunit, where it forms part of the central protuberance. In the 70S ribosome it contacts protein S13 of the 30S subunit (bridge B1b), connecting the 2 subunits; this bridge is implicated in subunit movement. Contacts the P site tRNA; the 5S rRNA and some of its associated proteins might help stabilize positioning of ribosome-bound tRNAs. This is Large ribosomal subunit protein uL5 from Shewanella piezotolerans (strain WP3 / JCM 13877).